Here is a 207-residue protein sequence, read N- to C-terminus: Small ribosomal subunit protein uS4c (207 aa).

Residues 92–150 (MRLDNILFRLGFVPTIPSARQLINHRHILVNNRIVDVPSFHCKPKDIITIGSPKTYQSI) form the S4 RNA-binding domain.

The protein belongs to the universal ribosomal protein uS4 family. Part of the 30S ribosomal subunit. Contacts protein S5. The interaction surface between S4 and S5 is involved in control of translational fidelity.

The protein localises to the plastid. It is found in the chloroplast. In terms of biological role, one of the primary rRNA binding proteins, it binds directly to 16S rRNA where it nucleates assembly of the body of the 30S subunit. Functionally, with S5 and S12 plays an important role in translational accuracy. The chain is Small ribosomal subunit protein uS4c (rps4) from Equisetum variegatum (Variegated horsetail).